We begin with the raw amino-acid sequence, 411 residues long: MFDALVIGSGPAGLAIAAELAQRGLKVQGLSPVDPFHPWENTYGIWGPELDSLGLEHLFGHRWSNCVSYFGEAPVQHQYNYGLFDRAQLQQHWLRQCEQGGLQWQLGKAAAIAHDSHHSCVTTAAGQELQARLVVDTTGHQAAFIQRPHSDAIAYQAAYGIIGQFSQPPIEPHQFVLMDYRSDHLSPEERQLPPTFLYAMDLGNDVYFVEETSLAACPAIPYDRLKQRLYQRLATRGVTVQVIQHEEYCLFPMNLPLPDLTQSVVGFGGAASMVHPASGYMVGALLRRAPDLANAIAAGLNASSSLTTAELATQAWRGLWPTEKIRKHYIYQFGLEKLMRFSEAQLNHHFQTFFGLPKEQWYGFLTNTLSLPELIQAMLRLFAQAPNDVRWGLMEQQGRELQLFWQAIAAR.

4-32 (ALVIGSGPAGLAIAAELAQRGLKVQGLSP) contributes to the NAD(+) binding site.

This sequence belongs to the lycopene cyclase family. FAD is required as a cofactor.

It carries out the reaction a carotenoid psi-end group = a carotenoid beta-end derivative. It catalyses the reaction all-trans-lycopene = gamma-carotene. The enzyme catalyses gamma-carotene = all-trans-beta-carotene. The catalysed reaction is all-trans-neurosporene = beta-zeacarotene. It participates in carotenoid biosynthesis; beta-carotene biosynthesis. The protein operates within carotenoid biosynthesis; beta-zeacarotene biosynthesis. Inhibited by the bleaching herbicide 2-(4-methylphenoxy)triethylamine hydrochloride (MPTA). In terms of biological role, catalyzes the double cyclization reaction which converts lycopene to beta-carotene. It also converts neurosporene to the monocyclic beta-zeacarotene but does not cyclize zeta-carotene. The protein is Lycopene beta cyclase of Synechococcus elongatus (strain ATCC 33912 / PCC 7942 / FACHB-805) (Anacystis nidulans R2).